We begin with the raw amino-acid sequence, 244 residues long: Mitophagy receptor atg43 (244 aa).

Residues M1 to W24 form a disordered region. Residues M1–H198 lie on the Cytoplasmic side of the membrane. Positions Y28 to I31 match the atg8 interacting motif (AIM) motif. The segment at S105–E131 is disordered. Acidic residues predominate over residues E113–E131. The segment at P165–N184 is involved in MIM complex binding. Required for normal vegetative cell population growth but is dispensable for mitophagy. A helical transmembrane segment spans residues V199 to I215. Topologically, residues F216 to D244 are mitochondrial intermembrane.

Interacts (via N-terminal atg8 interacting motif) with atg8; the interaction is direct. Interacts with the mitochondrial outer import machinery (MIM) complex subunits mim1 and mim2.

Its subcellular location is the mitochondrion outer membrane. Mitophagy receptor that tethers atg8 to the mitochondrial outer membrane to promote selective autophagy. The chain is Mitophagy receptor atg43 from Schizosaccharomyces pombe (strain 972 / ATCC 24843) (Fission yeast).